The following is a 71-amino-acid chain: Disintegrin viridin (71 aa).

In terms of domain architecture, Disintegrin spans 1–71 (AGEECDCGSP…SADCPRNRFH (71 aa)). 6 disulfide bridges follow: cysteine 5-cysteine 20, cysteine 7-cysteine 15, cysteine 14-cysteine 37, cysteine 28-cysteine 34, cysteine 33-cysteine 58, and cysteine 46-cysteine 65. The Cell attachment site signature appears at 50–52 (RGD). The interval 50–71 (RGDNPDDRCTGQSADCPRNRFH) is disordered.

Belongs to the venom metalloproteinase (M12B) family. P-II subfamily. P-IIa sub-subfamily. As to quaternary structure, monomer (disintegrin). In terms of tissue distribution, expressed by the venom gland.

The protein resides in the secreted. Inhibits fibrinogen interaction with platelets. Acts by binding to alpha-IIb/beta-3 (ITGA2B/ITGB3) on the platelet surface and inhibits aggregation induced by ADP, thrombin, platelet-activating factor and collagen. This is Disintegrin viridin from Crotalus viridis viridis (Prairie rattlesnake).